Consider the following 448-residue polypeptide: tRNA modification GTPase MnmE (448 aa).

(6S)-5-formyl-5,6,7,8-tetrahydrofolate is bound by residues arginine 24, glutamate 81, and lysine 120. One can recognise a TrmE-type G domain in the interval 216-373 (GLNVVLVGAP…LKRTLLREAG (158 aa)). Residue asparagine 226 participates in K(+) binding. GTP contacts are provided by residues 226–231 (NVGKSS), 245–251 (TDIAGTT), and 270–273 (DTAG). Serine 230 contacts Mg(2+). 3 residues coordinate K(+): threonine 245, isoleucine 247, and threonine 250. Threonine 251 provides a ligand contact to Mg(2+). Lysine 448 provides a ligand contact to (6S)-5-formyl-5,6,7,8-tetrahydrofolate.

Belongs to the TRAFAC class TrmE-Era-EngA-EngB-Septin-like GTPase superfamily. TrmE GTPase family. Homodimer. Heterotetramer of two MnmE and two MnmG subunits. K(+) serves as cofactor.

It is found in the cytoplasm. In terms of biological role, exhibits a very high intrinsic GTPase hydrolysis rate. Involved in the addition of a carboxymethylaminomethyl (cmnm) group at the wobble position (U34) of certain tRNAs, forming tRNA-cmnm(5)s(2)U34. In Neisseria meningitidis serogroup C / serotype 2a (strain ATCC 700532 / DSM 15464 / FAM18), this protein is tRNA modification GTPase MnmE.